The primary structure comprises 154 residues: Urease accessory protein UreE (154 aa).

Residues 134-154 (PESGAYGKSGHNHGHSHSHED) form a disordered region. The segment covering 143–154 (GHNHGHSHSHED) has biased composition (basic residues).

The protein belongs to the UreE family.

The protein localises to the cytoplasm. Its function is as follows. Involved in urease metallocenter assembly. Binds nickel. Probably functions as a nickel donor during metallocenter assembly. The chain is Urease accessory protein UreE from Alteromonas mediterranea (strain DSM 17117 / CIP 110805 / LMG 28347 / Deep ecotype).